We begin with the raw amino-acid sequence, 523 residues long: MKKKPLSAKIVFMKITEKILIVDFGGQYNQLIARRVRDLNVYSDIVPASKALDYIRENKPIGIIFTGGPNSVYEEKAPLPPKEIFNLNIPILGICYGMQAMAHCLGGKVEKSLKREFGKTLTKFDTGIPLFKNIKDKSSVWMSHVDCVSRLPEGFVSAAQTANTKNAAMANKEKKLYGIQFHAEVEHSEEGQNIIKNFLYNVCGAKGDWNMKSFLAEAIKDVQNTVKDGKVLLALSGGVDSSVLAALLNRAVGKNLTCIFVDHGLMRKNEGDEVEAAFRDTPMNFIRVNAESRFLGKLKGVSDPEKKRKIIGEEFIRVFEEEAEKIGTVDFLAQGTIYADVVESGTKGSAVIKSHHNVGGLPDHISFKSLIEPLKTLFKDEIRNLGTELGLPDYLVHRQPFPGPGLAIRIMGEITEEKLDILREADAIWRSELEHADIKKDLSQYFAVLTSTKTVGVMGDFRTYDYTLALRAVKTSDFMSADWVRIPYEVLDKVSSRIINEVKGINRIVYDITSKPPATIEWE.

Residues 18–208 (KILIVDFGGQ…LYNVCGAKGD (191 aa)) enclose the Glutamine amidotransferase type-1 domain. Catalysis depends on Cys-95, which acts as the Nucleophile. Residues His-182 and Glu-184 contribute to the active site. The 190-residue stretch at 209-398 (WNMKSFLAEA…LGLPDYLVHR (190 aa)) folds into the GMPS ATP-PPase domain. 236 to 242 (SGGVDSS) contacts ATP.

As to quaternary structure, homodimer.

It carries out the reaction XMP + L-glutamine + ATP + H2O = GMP + L-glutamate + AMP + diphosphate + 2 H(+). Its pathway is purine metabolism; GMP biosynthesis; GMP from XMP (L-Gln route): step 1/1. Catalyzes the synthesis of GMP from XMP. The protein is GMP synthase [glutamine-hydrolyzing] of Treponema denticola (strain ATCC 35405 / DSM 14222 / CIP 103919 / JCM 8153 / KCTC 15104).